A 431-amino-acid chain; its full sequence is Trigger factor (431 aa).

Positions 158-243 (GDLVAVETWS…VAEVSEPVVP (86 aa)) constitute a PPIase FKBP-type domain.

It belongs to the FKBP-type PPIase family. Tig subfamily.

It localises to the cytoplasm. The catalysed reaction is [protein]-peptidylproline (omega=180) = [protein]-peptidylproline (omega=0). Involved in protein export. Acts as a chaperone by maintaining the newly synthesized protein in an open conformation. Functions as a peptidyl-prolyl cis-trans isomerase. This chain is Trigger factor, found in Stenotrophomonas maltophilia (strain R551-3).